Here is a 284-residue protein sequence, read N- to C-terminus: MKKIAIFAKVHDPRCVGIAEELVEWLLARGLSPLVEPHLAKHISCSYTAKRDDIPEQADLVVVLGGDGTLISVARLVGDRQVPILGVNLGSLGFLTEITLTEMYPALERCLKGDYEVSERMMLRVSLHRGGAEIEGRQVLNDVVINKGALARIIDLETEVDGRYLTTFKADGLIISTPTGSTGYSLSANGPIIHPQLDCLVITPICPHTLTNRPIVVSGDALITISLQSVNEDVFLTLDGQVGFEVKHGDQIRIQRAERQTRLVQSRSKDYFEVLRTKLKWGER.

Aspartate 67 functions as the Proton acceptor in the catalytic mechanism. Residues aspartate 67–glycine 68, asparagine 141–aspartate 142, arginine 152, lysine 169, aspartate 171, threonine 182–serine 187, and glutamine 241 each bind NAD(+).

It belongs to the NAD kinase family. It depends on a divalent metal cation as a cofactor.

It is found in the cytoplasm. The catalysed reaction is NAD(+) + ATP = ADP + NADP(+) + H(+). Functionally, involved in the regulation of the intracellular balance of NAD and NADP, and is a key enzyme in the biosynthesis of NADP. Catalyzes specifically the phosphorylation on 2'-hydroxyl of the adenosine moiety of NAD to yield NADP. This is NAD kinase from Geotalea daltonii (strain DSM 22248 / JCM 15807 / FRC-32) (Geobacter daltonii).